Reading from the N-terminus, the 714-residue chain is DNA ligase (714 aa).

NAD(+) is bound by residues 47-51 (DAEYD), 96-97 (SL), and Glu-128. The active-site N6-AMP-lysine intermediate is Lys-130. The NAD(+) site is built by Arg-151, Glu-188, Lys-306, and Lys-330. Positions 435, 438, 453, and 459 each coordinate Zn(2+). The 78-residue stretch at 637–714 (RRDTAVAGKT…TEDEWLALIS (78 aa)) folds into the BRCT domain.

It belongs to the NAD-dependent DNA ligase family. LigA subfamily. It depends on Mg(2+) as a cofactor. The cofactor is Mn(2+).

The catalysed reaction is NAD(+) + (deoxyribonucleotide)n-3'-hydroxyl + 5'-phospho-(deoxyribonucleotide)m = (deoxyribonucleotide)n+m + AMP + beta-nicotinamide D-nucleotide.. Its function is as follows. DNA ligase that catalyzes the formation of phosphodiester linkages between 5'-phosphoryl and 3'-hydroxyl groups in double-stranded DNA using NAD as a coenzyme and as the energy source for the reaction. It is essential for DNA replication and repair of damaged DNA. This Rhodopseudomonas palustris (strain HaA2) protein is DNA ligase.